Here is a 44-residue protein sequence, read N- to C-terminus: Photosystem I reaction center subunit IX (44 aa).

The helical transmembrane segment at 7-27 (YLSVAPVLSTLWFASLAGLLI) threads the bilayer.

The protein belongs to the PsaJ family.

Its subcellular location is the plastid. The protein resides in the chloroplast thylakoid membrane. Functionally, may help in the organization of the PsaE and PsaF subunits. The polypeptide is Photosystem I reaction center subunit IX (Barbarea verna (Land cress)).